The following is a 206-amino-acid chain: Flavin prenyltransferase UbiX (206 aa).

FMN-binding positions include 11–13 (GAS), Ser37, 103–106 (SMST), and Arg138. Tyr168 and Arg184 together coordinate dimethylallyl phosphate.

It belongs to the UbiX/PAD1 family.

It catalyses the reaction dimethylallyl phosphate + FMNH2 = prenylated FMNH2 + phosphate. Functionally, flavin prenyltransferase that catalyzes the synthesis of the prenylated FMN cofactor (prenyl-FMN) for 4-hydroxy-3-polyprenylbenzoic acid decarboxylase UbiD. The prenyltransferase is metal-independent and links a dimethylallyl moiety from dimethylallyl monophosphate (DMAP) to the flavin N5 and C6 atoms of FMN. This chain is Flavin prenyltransferase UbiX, found in Synechocystis sp. (strain ATCC 27184 / PCC 6803 / Kazusa).